The sequence spans 826 residues: MAEPSAPESKHKSSLNSSPWSGLMALGNSRHGHHGPGAQCAHKAAGGAAPPKPAPAGLSGGLSQPAGWQSLLSFTILFLAWLAGFSSRLFAVIRFESIIHEFDPWFNYRSTHHLASHGFYEFLNWFDERAWYPLGRIVGGTVYPGLMITAGLIHWILNTLNITVHIRDVCVFLAPTFSGLTSISTFLLTRELWNQGAGLLAACFIAIVPGYISRSVAGSFDNEGIAIFALQFTYYLWVKSVKTGSVFWTMCCCLSYFYMVSAWGGYVFIINLIPLHVFVLLLMQRYSKRVYIAYSTFYIVGLILSMQIPFVGFQPIRTSEHMAAAGVFALLQAYAFLQYLRDRLTKQEFQTLFFLGVSLAAGAVFLSVIYLTYTGYIAPWSGRFYSLWDTGYAKIHIPIIASVSEHQPTTWVSFFFDLHILVCTFPAGLWFCIKNINDERVFVALYAISAVYFAGVMVRLMLTLTPVVCMLSAIAFSNVFEHYLGDDMKRENPPVEDSSDEDDKRNQGNLYDKAGKVRKHATEQEKTEEGLGPNIKSIVTMLMLMLLMMFAVHCTWVTSNAYSSPSVVLASYNHDGTRNILDDFREAYFWLRQNTDEHARVMSWWDYGYQIAGMANRTTLVDNNTWNNSHIALVGKAMSSNETAAYKIMRTLDVDYVLVIFGGVIGYSGDDINKFLWMVRIAEGEHPKDIRESDYFTPQGEFRVDKAGSPTLLNCLMYKMSYYRFGEMQLDFRTPPGFDRTRNAEIGNKDIKFKHLEEAFTSEHWLVRIYKVKAPDNRETLDHKPRVTNIFPKQKYLSKKTTKRKRGYIKNKLVFKKGKKISKKTV.

A disordered region spans residues 1-60; it reads MAEPSAPESKHKSSLNSSPWSGLMALGNSRHGHHGPGAQCAHKAAGGAAPPKPAPAGLSG. An N-acetylalanine modification is found at alanine 2. The Cytoplasmic segment spans residues 2–41; the sequence is AEPSAPESKHKSSLNSSPWSGLMALGNSRHGHHGPGAQCA. Serine 13, serine 18, and serine 29 each carry phosphoserine. Over residues 37–49 the composition is skewed to low complexity; the sequence is GAQCAHKAAGGAA. The chain crosses the membrane as a helical span at residues 42 to 86; sequence HKAAGGAAPPKPAPAGLSGGLSQPAGWQSLLSFTILFLAWLAGFS. At 87 to 173 the chain is on the lumenal side; that stretch reads SRLFAVIRFE…VHIRDVCVFL (87 aa). Residues 101–103 carry the DXD motif 1 motif; that stretch reads EFD. Aspartate 103 serves as a coordination point for Mn(2+). The helical transmembrane segment at 174–192 threads the bilayer; that stretch reads APTFSGLTSISTFLLTREL. The Cytoplasmic segment spans residues 193–194; the sequence is WN. A helical membrane pass occupies residues 195–212; sequence QGAGLLAACFIAIVPGYI. Topologically, residues 213–223 are lumenal; sequence SRSVAGSFDNE. Residues aspartate 221 and glutamate 223 each contribute to the Mn(2+) site. The DXD motif 2 signature appears at 221-223; the sequence is DNE. Residues 224-243 traverse the membrane as a helical segment; the sequence is GIAIFALQFTYYLWVKSVKT. The Cytoplasmic segment spans residues 244–245; that stretch reads GS. Residues 246 to 260 form a helical membrane-spanning segment; it reads VFWTMCCCLSYFYMV. Residues 261–265 lie on the Lumenal side of the membrane; sequence SAWGG. Residues 266-282 traverse the membrane as a helical segment; that stretch reads YVFIINLIPLHVFVLLL. Residues 283-287 are Cytoplasmic-facing; the sequence is MQRYS. Residues 288–313 traverse the membrane as a helical segment; the sequence is KRVYIAYSTFYIVGLILSMQIPFVGF. The Lumenal portion of the chain corresponds to 314–321; that stretch reads QPIRTSEH. Residues 322-341 form a helical membrane-spanning segment; it reads MAAAGVFALLQAYAFLQYLR. Residues 342–350 lie on the Cytoplasmic side of the membrane; sequence DRLTKQEFQ. A helical membrane pass occupies residues 351-371; it reads TLFFLGVSLAAGAVFLSVIYL. The Lumenal portion of the chain corresponds to 372–410; sequence TYTGYIAPWSGRFYSLWDTGYAKIHIPIIASVSEHQPTT. An SVSE motif motif is present at residues 402–405; the sequence is SVSE. Residues 411–433 form a helical membrane-spanning segment; it reads WVSFFFDLHILVCTFPAGLWFCI. Topologically, residues 434-439 are cytoplasmic; the sequence is KNINDE. Residues 440 to 456 traverse the membrane as a helical segment; sequence RVFVALYAISAVYFAGV. The Lumenal segment spans residues 457–460; the sequence is MVRL. Dolichyl diphosphooligosaccharide is bound at residue arginine 459. The helical transmembrane segment at 461–482 threads the bilayer; the sequence is MLTLTPVVCMLSAIAFSNVFEH. The Cytoplasmic portion of the chain corresponds to 483–526; the sequence is YLGDDMKRENPPVEDSSDEDDKRNQGNLYDKAGKVRKHATEQEK. Positions 490 to 509 are disordered; sequence RENPPVEDSSDEDDKRNQGN. Serine 498 and serine 499 each carry phosphoserine. Residues 527–552 form a helical membrane-spanning segment; that stretch reads TEEGLGPNIKSIVTMLMLMLLMMFAV. Residues 553 to 826 lie on the Lumenal side of the membrane; that stretch reads HCTWVTSNAY…KGKKISKKTV (274 aa). Residues 604–606 are interacts with target acceptor peptide in protein substrate; sequence WWD. The WWDYG motif motif lies at 604 to 608; that stretch reads WWDYG. Residue tyrosine 609 coordinates dolichyl diphosphooligosaccharide. 2 N-linked (GlcNAc...) asparagine glycosylation sites follow: asparagine 616 and asparagine 623. Asparagine 627 is a glycosylation site (N-linked (GlcNAc...) (high mannose) asparagine). Asparagine 641 is a glycosylation site (N-linked (GlcNAc...) asparagine). Positions 671–678 match the DK motif motif; it reads DINKFLWM.

Belongs to the STT3 family. As to quaternary structure, component of the oligosaccharyltransferase (OST) complex. There are 2 OST complexes, OST-A and OST-B, which contain STT3A or STT3B as catalytic subunit, respectively. OST-A and OST-B contain common core subunits RPN1, RPN2, OST48, OST4, DAD1 and TMEM258, and OST-B contains either MAGT1 or TUSC3 as specific accessory subunit. The cofactor is Mg(2+). Mn(2+) serves as cofactor. In terms of tissue distribution, expressed in heart, brain, placenta, lung, liver, muscle, kidney and pancreas. Expressed in skin fibroblasts (at protein level).

It is found in the endoplasmic reticulum. The protein resides in the endoplasmic reticulum membrane. It carries out the reaction a di-trans,poly-cis-dolichyl diphosphooligosaccharide + L-asparaginyl-[protein] = N(4)-(oligosaccharide-(1-&gt;4)-N-acetyl-beta-D-glucosaminyl-(1-&gt;4)-N-acetyl-beta-D-glucosaminyl)-L-asparaginyl-[protein] + a di-trans,poly-cis-dolichyl diphosphate + H(+). The protein operates within protein modification; protein glycosylation. Its function is as follows. Catalytic subunit of the oligosaccharyl transferase (OST) complex that catalyzes the initial transfer of a defined glycan (Glc(3)Man(9)GlcNAc(2) in eukaryotes) from the lipid carrier dolichol-pyrophosphate to an asparagine residue within an Asn-X-Ser/Thr consensus motif in nascent polypeptide chains, the first step in protein N-glycosylation. N-glycosylation occurs cotranslationally and the complex associates with the Sec61 complex at the channel-forming translocon complex that mediates protein translocation across the endoplasmic reticulum (ER). All subunits are required for a maximal enzyme activity. This subunit contains the active site and the acceptor peptide and donor lipid-linked oligosaccharide (LLO) binding pockets. STT3B is present in a small subset of OST complexes (OST-B) and mediates both cotranslational and post-translational N-glycosylation of target proteins: STT3B-containing complexes are required for efficient post-translational glycosylation and while they are less competent than STT3A-containing complexes for cotranslational glycosylation, they have the ability to mediate glycosylation of some nascent sites that are not accessible for STT3A. STT3B-containing complexes also act post-translationally and mediate modification of skipped glycosylation sites in unfolded proteins. Plays a role in ER-associated degradation (ERAD) pathway that mediates ubiquitin-dependent degradation of misfolded endoplasmic reticulum proteins by mediating N-glycosylation of unfolded proteins, which are then recognized by the ERAD pathway and targeted for degradation. Mediates glycosylation of the disease variant AMYL-TTR 'Asp-38' of TTR at 'Asn-118', leading to its degradation. In Homo sapiens (Human), this protein is Dolichyl-diphosphooligosaccharide--protein glycosyltransferase subunit STT3B.